Here is a 143-residue protein sequence, read N- to C-terminus: Large ribosomal subunit protein uL11 (143 aa).

It belongs to the universal ribosomal protein uL11 family. In terms of assembly, part of the ribosomal stalk of the 50S ribosomal subunit. Interacts with L10 and the large rRNA to form the base of the stalk. L10 forms an elongated spine to which L12 dimers bind in a sequential fashion forming a multimeric L10(L12)X complex. In terms of processing, one or more lysine residues are methylated.

Functionally, forms part of the ribosomal stalk which helps the ribosome interact with GTP-bound translation factors. In Cupriavidus pinatubonensis (strain JMP 134 / LMG 1197) (Cupriavidus necator (strain JMP 134)), this protein is Large ribosomal subunit protein uL11.